The following is a 192-amino-acid chain: Succinate dehydrogenase cytochrome b560 subunit, mitochondrial (192 aa).

A mitochondrion-targeting transit peptide spans 1-27; it reads MFGRTLNTFTSRNAPLVRNFDKFIVNN. At 48–83 the chain is on the mitochondrial matrix side; sequence YSTQAKKPFTITEKRIDELKTPYQPTSPHLTIYKFP. The chain crosses the membrane as a helical span at residues 84–113; the sequence is LPAVMSIMHRATGICLALGITGLAGVTLFA. Residues 114-131 are Mitochondrial intermembrane-facing; it reads PHDAIHYIQLLHTQYPAL. The chain crosses the membrane as a helical span at residues 132 to 156; the sequence is VYPAKFAVALPLTYHFCTGVRHIIW. Residue His146 coordinates heme b. At 157–164 the chain is on the mitochondrial matrix side; it reads DETVKGLS. A helical membrane pass occupies residues 165-186; sequence ISQIESSGKVLLAVVAVLSTIF. At 187-189 the chain is on the mitochondrial intermembrane side; that stretch reads TFV.

The protein belongs to the cytochrome b560 family. As to quaternary structure, component of complex II composed of four subunits: the flavoprotein (FP) sdha, iron-sulfur protein (IP) sdhb, and a cytochrome b560 composed of sdhc and sdhd. Heme b serves as cofactor.

The protein localises to the mitochondrion inner membrane. It functions in the pathway carbohydrate metabolism; tricarboxylic acid cycle. In terms of biological role, membrane-anchoring subunit of succinate dehydrogenase (SDH) that is involved in complex II of the mitochondrial electron transport chain and is responsible for transferring electrons from succinate to ubiquinone (coenzyme Q). This chain is Succinate dehydrogenase cytochrome b560 subunit, mitochondrial (sdhC), found in Dictyostelium discoideum (Social amoeba).